We begin with the raw amino-acid sequence, 557 residues long: Urocanate hydratase (557 aa).

A disordered region spans residues 1–20 (MSNPRHNEREVRSPRGDELN). Residues 52-53 (GG), glutamine 130, 176-178 (GMG), glutamate 196, arginine 201, 242-243 (NA), 263-267 (QTSAH), 273-274 (YL), and tyrosine 322 contribute to the NAD(+) site. Cysteine 410 is an active-site residue. Glycine 492 is an NAD(+) binding site.

This sequence belongs to the urocanase family. The cofactor is NAD(+).

Its subcellular location is the cytoplasm. It carries out the reaction 4-imidazolone-5-propanoate = trans-urocanate + H2O. It functions in the pathway amino-acid degradation; L-histidine degradation into L-glutamate; N-formimidoyl-L-glutamate from L-histidine: step 2/3. Its function is as follows. Catalyzes the conversion of urocanate to 4-imidazolone-5-propionate. The chain is Urocanate hydratase from Brucella canis (strain ATCC 23365 / NCTC 10854 / RM-666).